Reading from the N-terminus, the 471-residue chain is Ribulose bisphosphate carboxylase large chain (471 aa).

Residues Asn-115 and Thr-165 each contribute to the substrate site. Lys-167 serves as the catalytic Proton acceptor. Position 169 (Lys-169) interacts with substrate. Residues Lys-193, Asp-195, and Glu-196 each coordinate Mg(2+). Lys-193 bears the N6-carboxylysine mark. The Proton acceptor role is filled by His-286. Substrate-binding residues include Arg-287, His-319, and Ser-371.

This sequence belongs to the RuBisCO large chain family. Type I subfamily. As to quaternary structure, heterohexadecamer of 8 large chains and 8 small chains. Mg(2+) serves as cofactor.

The catalysed reaction is 2 (2R)-3-phosphoglycerate + 2 H(+) = D-ribulose 1,5-bisphosphate + CO2 + H2O. It catalyses the reaction D-ribulose 1,5-bisphosphate + O2 = 2-phosphoglycolate + (2R)-3-phosphoglycerate + 2 H(+). RuBisCO catalyzes two reactions: the carboxylation of D-ribulose 1,5-bisphosphate, the primary event in carbon dioxide fixation, as well as the oxidative fragmentation of the pentose substrate. Both reactions occur simultaneously and in competition at the same active site. The sequence is that of Ribulose bisphosphate carboxylase large chain from Alvinoconcha hessleri symbiotic bacterium.